The primary structure comprises 358 residues: DNA polymerase IV (358 aa).

Residues 4–185 form the UmuC domain; that stretch reads IIHIDMDCYF…LSLRKIPGVG (182 aa). The Mg(2+) site is built by Asp-8 and Asp-103. Residue Glu-104 is part of the active site.

It belongs to the DNA polymerase type-Y family. As to quaternary structure, monomer. Mg(2+) serves as cofactor.

The protein resides in the cytoplasm. The catalysed reaction is DNA(n) + a 2'-deoxyribonucleoside 5'-triphosphate = DNA(n+1) + diphosphate. Its function is as follows. Poorly processive, error-prone DNA polymerase involved in untargeted mutagenesis. Copies undamaged DNA at stalled replication forks, which arise in vivo from mismatched or misaligned primer ends. These misaligned primers can be extended by PolIV. Exhibits no 3'-5' exonuclease (proofreading) activity. May be involved in translesional synthesis, in conjunction with the beta clamp from PolIII. This chain is DNA polymerase IV, found in Shewanella sp. (strain W3-18-1).